The sequence spans 320 residues: o-succinylbenzoate synthase (320 aa).

K133 acts as the Proton donor in catalysis. Positions 161, 190, and 213 each coordinate Mg(2+). K235 acts as the Proton acceptor in catalysis.

The protein belongs to the mandelate racemase/muconate lactonizing enzyme family. MenC type 1 subfamily. A divalent metal cation serves as cofactor.

The catalysed reaction is (1R,6R)-6-hydroxy-2-succinyl-cyclohexa-2,4-diene-1-carboxylate = 2-succinylbenzoate + H2O. It functions in the pathway quinol/quinone metabolism; 1,4-dihydroxy-2-naphthoate biosynthesis; 1,4-dihydroxy-2-naphthoate from chorismate: step 4/7. Its pathway is quinol/quinone metabolism; menaquinone biosynthesis. Converts 2-succinyl-6-hydroxy-2,4-cyclohexadiene-1-carboxylate (SHCHC) to 2-succinylbenzoate (OSB). This Escherichia coli O9:H4 (strain HS) protein is o-succinylbenzoate synthase.